Here is an 895-residue protein sequence, read N- to C-terminus: DNA mismatch repair protein MutS (895 aa).

632-639 (GPNMAGKS) contributes to the ATP binding site. A disordered region spans residues 824–849 (VTQDKKQVKKQTKNNHSARSGSRQQQ). The span at 837–849 (NNHSARSGSRQQQ) shows a compositional bias: polar residues.

This sequence belongs to the DNA mismatch repair MutS family.

Its function is as follows. This protein is involved in the repair of mismatches in DNA. It is possible that it carries out the mismatch recognition step. This protein has a weak ATPase activity. In Desulforapulum autotrophicum (strain ATCC 43914 / DSM 3382 / VKM B-1955 / HRM2) (Desulfobacterium autotrophicum), this protein is DNA mismatch repair protein MutS.